The primary structure comprises 302 residues: Sulfate adenylyltransferase subunit 2 (302 aa).

Residues 279–302 are disordered; it reads ERQGRAIDHDSSGSMELKKRQGYF. Over residues 280–302 the composition is skewed to basic and acidic residues; that stretch reads RQGRAIDHDSSGSMELKKRQGYF.

It belongs to the PAPS reductase family. CysD subfamily. As to quaternary structure, heterodimer composed of CysD, the smaller subunit, and CysN.

It carries out the reaction sulfate + ATP + H(+) = adenosine 5'-phosphosulfate + diphosphate. It participates in sulfur metabolism; hydrogen sulfide biosynthesis; sulfite from sulfate: step 1/3. Functionally, with CysN forms the ATP sulfurylase (ATPS) that catalyzes the adenylation of sulfate producing adenosine 5'-phosphosulfate (APS) and diphosphate, the first enzymatic step in sulfur assimilation pathway. APS synthesis involves the formation of a high-energy phosphoric-sulfuric acid anhydride bond driven by GTP hydrolysis by CysN coupled to ATP hydrolysis by CysD. This Aliivibrio fischeri (strain ATCC 700601 / ES114) (Vibrio fischeri) protein is Sulfate adenylyltransferase subunit 2.